We begin with the raw amino-acid sequence, 499 residues long: Chaperone SurA (499 aa).

The N-terminal stretch at 1-36 (MKRQEFALFSLTLMLSPWRRVLLPAVLAAMAGPALA) is a signal peptide. 2 PpiC domains span residues 231 to 333 (PTEF…KLTA) and 352 to 450 (ITQT…QVEN).

The protein resides in the periplasm. It catalyses the reaction [protein]-peptidylproline (omega=180) = [protein]-peptidylproline (omega=0). In terms of biological role, chaperone involved in the correct folding and assembly of outer membrane proteins. Recognizes specific patterns of aromatic residues and the orientation of their side chains, which are found more frequently in integral outer membrane proteins. May act in both early periplasmic and late outer membrane-associated steps of protein maturation. The protein is Chaperone SurA of Cupriavidus pinatubonensis (strain JMP 134 / LMG 1197) (Cupriavidus necator (strain JMP 134)).